A 310-amino-acid chain; its full sequence is L-lactate dehydrogenase (310 aa).

Residues V11, D32, and R37 each contribute to the NAD(+) site. Substrate contacts are provided by residues Q79, R85, and 117 to 120; that span reads NPVD. NAD(+) is bound by residues 115–117 and T140; that span reads VTN. 145–148 contacts substrate; that stretch reads DTAR. Residues R150 and H165 each contribute to the beta-D-fructose 1,6-bisphosphate site. H172 functions as the Proton acceptor in the catalytic mechanism. Residue Y221 is modified to Phosphotyrosine. A substrate-binding site is contributed by T230.

Belongs to the LDH/MDH superfamily. LDH family. In terms of assembly, homotetramer.

The protein resides in the cytoplasm. The enzyme catalyses (S)-lactate + NAD(+) = pyruvate + NADH + H(+). Its pathway is fermentation; pyruvate fermentation to lactate; (S)-lactate from pyruvate: step 1/1. Its activity is regulated as follows. Allosterically activated by fructose 1,6-bisphosphate (FBP). Its function is as follows. Catalyzes the conversion of lactate to pyruvate. This is L-lactate dehydrogenase from Fervidobacterium nodosum (strain ATCC 35602 / DSM 5306 / Rt17-B1).